A 698-amino-acid polypeptide reads, in one-letter code: Transcription factor cwo (698 aa).

A basic motif; degenerate region spans residues 62–75; it reads QDPLSHRIIEKRRR. Positions 62 to 117 constitute a bHLH domain; that stretch reads QDPLSHRIIEKRRRDRMNSCLADLSRLIPPQYQRKGRGRIEKTEIIEMAIRHLKHL. A helix-loop-helix motif region spans residues 76 to 117; the sequence is DRMNSCLADLSRLIPPQYQRKGRGRIEKTEIIEMAIRHLKHL. Residues 128 to 159 form the Orange domain; sequence YRSGYMDCMKEAAKFLYDVHMQDFCHRLLGRL. Disordered regions lie at residues 257–319 and 349–369; these read SSPA…ASST and STAPHHHHHHTDSSHHDFESS. A compositionally biased stretch (low complexity) spans 280-318; that stretch reads APPAADNVPSNSTGSGSAAACAGGNSNSSGSNSSNAASS. A compositionally biased stretch (basic and acidic residues) spans 359–369; the sequence is TDSSHHDFESS.

In terms of tissue distribution, expressed in adult brain where it is detected in the dorsal lateral neurons, small and large ventral lateral neurons and dorsal neurons 1, 2 and 3 (at protein level). Expressed at constant levels in a 12 hour light / 12 hour day cycle (at protein level). Strongly expressed in pacemaker neurons. In adults, mRNA expression oscillates in a circadian manner with a peak at around 14 hour Zeitgeber time. mRNA levels oscillate in a rhythmic manner in both 12 hour light / 12 hour dark and constant dark conditions with a morning peak around the time of lights-on and an evening peak around the time of lights-off in light/dark conditions. During stage 8 of embryonic development, expressed in the anterior and posterior midgut primordia and expression in the gut continues throughout embryonic development. During germ band retraction, expression is initiated in many tissues in a prominent segmentally repeated pattern. Later, expression is ubiquitous but has higher levels in segmentally repeated clusters of cells. Expression is also found in cells of the amnioserosa, in the head region, in posterior spiracles and in tracheal trees.

The protein localises to the nucleus. Its function is as follows. Plays a role in the regulation of circadian rhythms. Transcriptional repressor which inhibits Clock-mediated transcriptional activation by binding to E boxes in the promoters of Clock target genes and repressing their transcription. E box binding activity is time-dependent with higher binding activity seen in the early morning (zeitgeber time 2) than early evening (zeitgeber time 14) and is dependent on the presence of the circadian protein per. It is likely that per binds to Clock-cycle heterodimers, reducing their affinity for E box binding and allowing cwo to bind instead. Negatively regulates its own expression. This chain is Transcription factor cwo, found in Drosophila melanogaster (Fruit fly).